We begin with the raw amino-acid sequence, 236 residues long: Bidirectional sugar transporter SWEET2 (236 aa).

The Extracellular portion of the chain corresponds to 1 to 15 (MDVFAFNASLSMCKD). Asn7 carries an N-linked (GlcNAc...) asparagine glycan. The chain crosses the membrane as a helical span at residues 16–36 (VAGIAGNIFAFGLFVSPMPTF). Residues 18 to 103 (GIAGNIFAFG…ILFIMHTDKK (86 aa)) enclose the MtN3/slv 1 domain. The Cytoplasmic portion of the chain corresponds to 37–50 (RRIMRNKSTEQFSG). A helical membrane pass occupies residues 51–71 (LPYIYALLNCLICLWYGTPFI). Residues 72 to 76 (SHSNA) lie on the Extracellular side of the membrane. A helical transmembrane segment spans residues 77 to 97 (MLMTVNSVGATFQLCYIILFI). At 98 to 108 (MHTDKKNKMKM) the chain is on the cytoplasmic side. The helical transmembrane segment at 109-129 (LGLLFVVFAVVGVIVAGSLQI) threads the bilayer. The Extracellular segment spans residues 130–137 (PDQLTRWY). The chain crosses the membrane as a helical span at residues 138–158 (FVGFLSCGSLVSMFASPLFVI). The region spanning 138–221 (FVGFLSCGSL…LALYCYYHRN (84 aa)) is the MtN3/slv 2 domain. Residues 159–170 (NLVIRTKSVEFM) are Cytoplasmic-facing. A helical transmembrane segment spans residues 171–191 (PFYLSLSTFLMSASFLLYGLF). Residues 192–194 (NSD) are Extracellular-facing. A helical transmembrane segment spans residues 195–215 (AFVYTPNGIGTILGIVQLALY). The Cytoplasmic segment spans residues 216–236 (CYYHRNSIEEETKEPLIVSYV).

Belongs to the SWEET sugar transporter family. As to quaternary structure, forms heterooligomers with SWEET17.

Its subcellular location is the cell membrane. Mediates both low-affinity uptake and efflux of sugar across the plasma membrane. This chain is Bidirectional sugar transporter SWEET2, found in Arabidopsis thaliana (Mouse-ear cress).